The sequence spans 257 residues: Dihydroorotate dehydrogenase B (NAD(+)), electron transfer subunit (257 aa).

In terms of domain architecture, FAD-binding FR-type spans 2–102 (MKQEQMTVVR…LGPLGNGFPL (101 aa)). FAD contacts are provided by residues 53–56 (RPLS), 70–72 (IYR), and 77–78 (GT). [2Fe-2S] cluster contacts are provided by cysteine 221, cysteine 226, cysteine 229, and cysteine 244.

This sequence belongs to the PyrK family. In terms of assembly, heterotetramer of 2 PyrK and 2 PyrD type B subunits. [2Fe-2S] cluster serves as cofactor. Requires FAD as cofactor.

The protein operates within pyrimidine metabolism; UMP biosynthesis via de novo pathway; orotate from (S)-dihydroorotate (NAD(+) route): step 1/1. Its function is as follows. Responsible for channeling the electrons from the oxidation of dihydroorotate from the FMN redox center in the PyrD type B subunit to the ultimate electron acceptor NAD(+). In Geobacillus sp. (strain WCH70), this protein is Dihydroorotate dehydrogenase B (NAD(+)), electron transfer subunit.